Here is a 565-residue protein sequence, read N- to C-terminus: Thiol:disulfide interchange protein DsbD (565 aa).

Positions 1–19 (MAQRIFTLILLLCSTSVFA) are cleaved as a signal peptide. 2 disulfide bridges follow: C122-C128 and C182-C304. The next 7 membrane-spanning stretches (helical) occupy residues 163–183 (LPFS…TPCV), 208–228 (LLTF…GLVV), 243–263 (YVLI…FGLF), 296–316 (IAGL…LLYI), 323–343 (WLGG…LMLI), 357–377 (WMEQ…VFLL), and 384–404 (VWGL…AFIT). In terms of domain architecture, Thioredoxin spans 434–565 (WAFGATHTAQ…FSAHLRDRQP (132 aa)). Cysteines 480 and 483 form a disulfide.

The protein belongs to the thioredoxin family. DsbD subfamily.

It is found in the cell inner membrane. It carries out the reaction [protein]-dithiol + NAD(+) = [protein]-disulfide + NADH + H(+). The enzyme catalyses [protein]-dithiol + NADP(+) = [protein]-disulfide + NADPH + H(+). Required to facilitate the formation of correct disulfide bonds in some periplasmic proteins and for the assembly of the periplasmic c-type cytochromes. Acts by transferring electrons from cytoplasmic thioredoxin to the periplasm. This transfer involves a cascade of disulfide bond formation and reduction steps. The chain is Thiol:disulfide interchange protein DsbD from Shigella flexneri serotype 5b (strain 8401).